Consider the following 572-residue polypeptide: MRSDIVKKGYQRAPHRSLLRATGLKDEDFNKPFIGIANSYIDIIPGHFFLNRYAQIIKEEIRAAGGVPFEFNTIGVDDGIAMGHSGMLYSLPSRELIADSIETMMNAHSLDAMICIPNCDKIVPGMLMGALRVNVPTIFVSGGPMKAGKLEDGTILDLNSAFEAVGAFAEGKISEKRLHEIECNACPGGGSCSGMFTANSMNTLCEAMGVALPGNGTILALSKEREELLRKAARRIVEIALDERKTEQFRFRNILNKKAVHNAFVVDMAMGGSTNTILHMLAIAKEAEVDFNLDSINAIASQVAHIAKIAPALSTIHMEDINRAGGVSAVMNEVAKRNASLGSHSADSILYLDALTITGETLGERIANAQIVDSSVIRHNENAYSPVGGLKILYGNLAREGAVLKVAAVAESMKEFEGSAVCFNSQEEAIKGIAGGKVKAGNVVVIRYEGPKGGPGMQEMLTPTSLIMGMGLGESVALITDGRFSGATRGGCIGHISPEAAEGGLIALIEDGDKIAISVSKGTLELLVDSKIIESRRTQWKPIKKEIKSKWLKRYSLLVSNAANGAVLKTEI.

Asp-78 is a Mg(2+) binding site. Position 119 (Cys-119) interacts with [2Fe-2S] cluster. Mg(2+) contacts are provided by Asp-120 and Lys-121. Lys-121 bears the N6-carboxylysine mark. Residue Cys-192 coordinates [2Fe-2S] cluster. Glu-459 serves as a coordination point for Mg(2+). Ser-485 functions as the Proton acceptor in the catalytic mechanism.

Belongs to the IlvD/Edd family. Homodimer. [2Fe-2S] cluster is required as a cofactor. It depends on Mg(2+) as a cofactor.

It catalyses the reaction (2R)-2,3-dihydroxy-3-methylbutanoate = 3-methyl-2-oxobutanoate + H2O. The enzyme catalyses (2R,3R)-2,3-dihydroxy-3-methylpentanoate = (S)-3-methyl-2-oxopentanoate + H2O. It functions in the pathway amino-acid biosynthesis; L-isoleucine biosynthesis; L-isoleucine from 2-oxobutanoate: step 3/4. Its pathway is amino-acid biosynthesis; L-valine biosynthesis; L-valine from pyruvate: step 3/4. Functions in the biosynthesis of branched-chain amino acids. Catalyzes the dehydration of (2R,3R)-2,3-dihydroxy-3-methylpentanoate (2,3-dihydroxy-3-methylvalerate) into 2-oxo-3-methylpentanoate (2-oxo-3-methylvalerate) and of (2R)-2,3-dihydroxy-3-methylbutanoate (2,3-dihydroxyisovalerate) into 2-oxo-3-methylbutanoate (2-oxoisovalerate), the penultimate precursor to L-isoleucine and L-valine, respectively. In Helicobacter hepaticus (strain ATCC 51449 / 3B1), this protein is Dihydroxy-acid dehydratase.